Reading from the N-terminus, the 514-residue chain is Histidine ammonia-lyase (514 aa).

The 5-imidazolinone (Ala-Gly) cross-link spans 143–145 (ASG). Ser-144 is subject to 2,3-didehydroalanine (Ser).

Belongs to the PAL/histidase family. Contains an active site 4-methylidene-imidazol-5-one (MIO), which is formed autocatalytically by cyclization and dehydration of residues Ala-Ser-Gly.

It is found in the cytoplasm. The catalysed reaction is L-histidine = trans-urocanate + NH4(+). The protein operates within amino-acid degradation; L-histidine degradation into L-glutamate; N-formimidoyl-L-glutamate from L-histidine: step 1/3. The protein is Histidine ammonia-lyase of Photorhabdus laumondii subsp. laumondii (strain DSM 15139 / CIP 105565 / TT01) (Photorhabdus luminescens subsp. laumondii).